Reading from the N-terminus, the 644-residue chain is Exoribonuclease 2 (644 aa).

The RNB domain occupies 190–516; the sequence is REDLTALDFI…INHRLLKALI (327 aa). Residues 562-644 enclose the S1 motif domain; the sequence is DSRFAAEIID…ENRSVIARPV (83 aa).

It belongs to the RNR ribonuclease family. RNase II subfamily.

It is found in the cytoplasm. It catalyses the reaction Exonucleolytic cleavage in the 3'- to 5'-direction to yield nucleoside 5'-phosphates.. Its function is as follows. Involved in mRNA degradation. Hydrolyzes single-stranded polyribonucleotides processively in the 3' to 5' direction. This chain is Exoribonuclease 2, found in Sodalis glossinidius (strain morsitans).